A 163-amino-acid polypeptide reads, in one-letter code: Transmembrane protein 278 (163 aa).

The interval 1–37 (MSEQGRETEEEEGGGGASDTAPMLPRGPPDHQASALT) is disordered. 2 consecutive transmembrane segments (helical) span residues 51 to 71 (LLAGLLLHLLLPAAAFLLVLL) and 105 to 125 (AALIVFGLLSLPPLLVLASAV). A compositionally biased stretch (pro residues) spans 136-148 (LLPPPAGTPGPRR). The tract at residues 136–156 (LLPPPAGTPGPRRPPGRPDED) is disordered.

Belongs to the TMEM88 family.

It is found in the membrane. This Homo sapiens (Human) protein is Transmembrane protein 278.